The primary structure comprises 1166 residues: MAPTLFQKLFSKRTGLGAPGRDARDPDCGFSWPLPEFDPSQIRLIVYQDCERRGRNVLFDSSVKRRNEDISVSKLGSDAQVKVFGKCCQLKPGGDSSSSLDSSVTSSSDIKDQCLKYQGSRCSSDANMLGEMMFGSVAMSYKGSTLKIHQIRSPPQLMLSKVFTARTGSSICGSLNTLQDSLEFINQDNNTLKADNNTVINGLLGNIGLSQFCSPRRAFSEQGPLRLIRSASFFAVHSNPMDMPGRELNEDRDSGIARSASLSSLLITPFPSPNSSLTRSCASSYQRRWRRSQTTSLENGVFPRWSIEESFNLSDESCGPNPGIVRKKKIAIGVIFSLSKDEDENNKFNEFFFSHFPLFESHMNKLKSAIEQAMKMSRRSADASQRSLAYNRIVDALNEFRTTICNLYTMPRIGEPVWLTMMSGTPEKNHLCYRFMKEFTFLMENASKNQFLPALITAVLTNHLAWVPTVMPNGQPPIKIFLEKHSSQSVDMLAKTHPYNPLWAQLGDLYGAIGSPVRLARTVVVGKRQDMVQRLLYFLTYFIRCSELQETHLLENGEDEAIVMPGTVITTTLEKGEIEESEYVLVTMHRNKSSLLFKESEEIRTPNCNCKYCSHPLLGQNVENISQQEREDIQNSSKELLGISDECQMISPSDCQEENAVDVKQYRDKLRTCFDAKLETVVCTGSVPVDKCALSESGLESTEETWQSEKLLDSDSHTGKAMRSTGMVVEKKPPDKIVPASFSCEAAQTKVTFLIGDSMSPDSDTELRSQAVVDQITRHHTKPLKEERGAIDQHQETKQTTKDQSGESDTQNMVSEEPCELPCWNHSDPESMSLFDEYFNDDSIETRTIDDVPFKTSTDSKDHCCMLEFSKILCTKNNKQNNEFCKCIETVPQDSCKTCFPQQDQRDTLSILVPHGDKESSDKKIAVGTEWDIPRNESSDSALGDSESEDTGHDMTRQVSSYYGGEQEDWAEEDEIPFPGSKLIEVSAVQPNIANFGRSLLGGYCSSYVPDFVLQGIGSDERFRQCLMSDLSHAVQHPVLDEPIAEAVCIIADMDKWTVQVASSQRRVTDNKLGKEVLVSSLVSNLLHSTLQLYKHNLSPNFCVMHLEDRLQELYFKSKMLSEYLRGQMRVHVKELGVVLGIESSDLPLLAAVASTHSPYVAQILL.

Residues 37 to 478 form the uDENN FNIP1/2-type domain; sequence FDPSQIRLIV…TVMPNGQPPI (442 aa). A phosphoserine; by AMPK mark is found at S220, S230, S232, and S261. Phosphothreonine is present on T294. S296 is modified (phosphoserine). One can recognise a cDENN FNIP1/2-type domain in the interval 486-1092; it reads SSQSVDMLAK…VSNLLHSTLQ (607 aa). Phosphoserine; by AMPK is present on S593. The residue at position 594 (S594) is a Phosphoserine. C608 and C610 together coordinate Zn(2+). Positions 608-615 match the Cys degron motif; that stretch reads CNCKYCSH. The segment at 611-612 is KY-finger; sequence KY. Zn(2+)-binding residues include C613 and H615. Residues S760 and S763 each carry the phosphoserine modification. 2 disordered regions span residues 781–817 and 912–956; these read TKPL…VSEE and LVPH…HDMT. Basic and acidic residues-rich tracts occupy residues 783-805 and 915-925; these read PLKE…KDQS and HGDKESSDKKI. Positions 929 to 1166 are interaction with HSP90AA1; it reads TEWDIPRNES…HSPYVAQILL (238 aa). S938 is subject to Phosphoserine; alternate; by CK2. O-linked (GlcNAc) serine; alternate glycosylation is present at S938. A phosphoserine; by CK2 mark is found at S939, S941, S946, and S948. In terms of domain architecture, dDENN FNIP1/2-type spans 1102–1157; sequence FCVMHLEDRLQELYFKSKMLSEYLRGQMRVHVKELGVVLGIESSDLPLLAAVASTH. K1119 is covalently cross-linked (Glycyl lysine isopeptide (Lys-Gly) (interchain with G-Cter in ubiquitin)).

This sequence belongs to the FNIP family. Homodimer and homomultimer. Heterodimer and heteromultimer with FNIP2. Interacts with FLCN (via C-terminus). Component of the lysosomal folliculin complex (LFC), composed of FLCN, FNIP1 (or FNIP2), RagA/RRAGA or RagB/RRAGB GDP-bound, RagC/RRAGC or RagD/RRAGD GTP-bound, and Ragulator. Interacts with HSPCA and with the PRKAA1, PRKAB1 and PRKAG1 subunits of 5'-AMP-activated protein kinase (AMPK). Phosphorylated FLCN and AMPK are preferentially bound. Interacts with HSP70, STIP1, PTGES3, CDC37, BRAF, GCR and CDK4. Interacts with HSP90AA1; the interaction inhibits HSP90AA1 ATPase activity. Interacts with ATP2A2. Post-translationally, phosphorylated by AMPK in response to energetic stress. Phosphorylation by AMPK in response to mitochondrial damage promotes inactivation of the non-canonical mTORC1 signaling, nuclear translocation of TFEB and TFE3, inducing transcription of lysosomal or autophagy genes. Sequential phosphorylation by CK2 promotes its gradual interaction with HSP90AA1/Hsp90. Priming phosphorylation at Ser-938 is followed by relay phosphorylation at Ser-939, Ser-941, Ser-946 and Ser-948, promoting its gradual interaction with HSP90AA1/Hsp90. This leads to incremental inhibition of HSP90AA1/Hsp90 ATPase activity and gradual activation of both kinase and non-kinase clients. Dephosphorylated by protein phosphatase 5 (PP5), promoting glycosylation by OGT. In terms of processing, glcNAcylation at Ser-938 by OGT following dephosphorylation by protein phosphatase 5 (PP5) promotes ubiquitination and degradation by the proteasome. Ubiquitinated through 'Lys-11' linkage of ubiquitin moieties at Lys-1119 following glycosylation by OGT, leading to its degradation by the proteasome. Ubiquitinated by the CRL2(FEM1B) complex in response to reductive stress: reductive stress causes reduction of the conserved Cys degron in FNIP1, followed by zinc-binding, zinc acting as a molecular glue for recognition by the CRL2(FEM1B) complex. Ubiquitination leads to FNIP1 degradation, and activation of mitochondria to recalibrate reactive oxygen species (ROS). Post-translationally, oxidation of the Cys degron in normal conditions promotes its stabilization by preventing recognition and ubiquitination by the CRL2(FEM1B) complex. In terms of tissue distribution, strong expression is found in the heart, liver placenta, muscle, nasal mucosa, salivary gland and uvula and moderate expression in kidney and lung. Higher levels detected in clear cell renal cell carcinoma (RCC) and chromophobe RCC than in normal kidney tissue. Expressed in peripheral blood mononuclear cells.

It localises to the lysosome membrane. The protein localises to the cytoplasm. Its subcellular location is the cytosol. In terms of biological role, binding partner of the GTPase-activating protein FLCN: involved in the cellular response to amino acid availability by regulating the non-canonical mTORC1 signaling cascade controlling the MiT/TFE factors TFEB and TFE3. Required to promote FLCN recruitment to lysosomes and interaction with Rag GTPases, leading to activation of the non-canonical mTORC1 signaling. In low-amino acid conditions, component of the lysosomal folliculin complex (LFC) on the membrane of lysosomes, which inhibits the GTPase-activating activity of FLCN, thereby inactivating mTORC1 and promoting nuclear translocation of TFEB and TFE3. Upon amino acid restimulation, disassembly of the LFC complex liberates the GTPase-activating activity of FLCN, leading to activation of mTORC1 and subsequent inactivation of TFEB and TFE3. Together with FLCN, regulates autophagy: following phosphorylation by ULK1, interacts with GABARAP and promotes autophagy. In addition to its role in mTORC1 signaling, also acts as a co-chaperone of HSP90AA1/Hsp90: following gradual phosphorylation by CK2, inhibits the ATPase activity of HSP90AA1/Hsp90, leading to activate both kinase and non-kinase client proteins of HSP90AA1/Hsp90. Acts as a scaffold to load client protein FLCN onto HSP90AA1/Hsp90. Competes with the activating co-chaperone AHSA1 for binding to HSP90AA1, thereby providing a reciprocal regulatory mechanism for chaperoning of client proteins. Also acts as a core component of the reductive stress response by inhibiting activation of mitochondria in normal conditions: in response to reductive stress, the conserved Cys degron is reduced, leading to recognition and polyubiquitylation by the CRL2(FEM1B) complex, followed by proteasomal. Required for B-cell development. The chain is Folliculin-interacting protein 1 from Homo sapiens (Human).